A 217-amino-acid chain; its full sequence is Choline transport system permease protein OpuBB (217 aa).

In terms of domain architecture, ABC transmembrane type-1 spans 19–198; that stretch reads TYEHITISLI…ILAIVIDYVL (180 aa). The next 6 helical transmembrane spans lie at 23–43, 52–74, 84–101, 128–148, 150–170, and 180–200; these read ITIS…LGVV, GTII…AFFI, AIVA…RNTY, LVEL…STIY, IGWA…YIFI, and IIGG…VLAV.

The protein belongs to the binding-protein-dependent transport system permease family. CysTW subfamily.

The protein resides in the cell membrane. Involved in a high affinity multicomponent binding-protein-dependent transport system for choline; probably responsible for the translocation of the substrate across the membrane. This is Choline transport system permease protein OpuBB (opuBB) from Bacillus subtilis (strain 168).